Reading from the N-terminus, the 823-residue chain is Probable inorganic carbon transporter subunit DabA (823 aa).

Residues Cys-361, Asp-363, His-527, and Cys-542 each coordinate Zn(2+).

This sequence belongs to the inorganic carbon transporter (TC 9.A.2) DabA family. As to quaternary structure, forms a complex with DabB. Zn(2+) serves as cofactor.

It localises to the cell inner membrane. Intracellular DIC accumulation is sensitive to CCCP (carbonyl cyanide-m-chlorophenylhydrazone) and DCCD (N,N-dicyclohexylcarbodiimide) and therefore likely driven by either proton potential, ATP, or both. Its function is as follows. Part of an energy-coupled inorganic carbon pump. In terms of biological role, probably involved in transport of dissolved inorganic carbon (DIC) with upstream gene dabB (Tcr_0853); has been suggested to be a proton-DIC symporter. The protein is Probable inorganic carbon transporter subunit DabA of Hydrogenovibrio crunogenus (strain DSM 25203 / XCL-2) (Thiomicrospira crunogena).